We begin with the raw amino-acid sequence, 213 residues long: Leucyl/phenylalanyl-tRNA--protein transferase (213 aa).

This sequence belongs to the L/F-transferase family.

It localises to the cytoplasm. The catalysed reaction is N-terminal L-lysyl-[protein] + L-leucyl-tRNA(Leu) = N-terminal L-leucyl-L-lysyl-[protein] + tRNA(Leu) + H(+). The enzyme catalyses N-terminal L-arginyl-[protein] + L-leucyl-tRNA(Leu) = N-terminal L-leucyl-L-arginyl-[protein] + tRNA(Leu) + H(+). It carries out the reaction L-phenylalanyl-tRNA(Phe) + an N-terminal L-alpha-aminoacyl-[protein] = an N-terminal L-phenylalanyl-L-alpha-aminoacyl-[protein] + tRNA(Phe). In terms of biological role, functions in the N-end rule pathway of protein degradation where it conjugates Leu, Phe and, less efficiently, Met from aminoacyl-tRNAs to the N-termini of proteins containing an N-terminal arginine or lysine. This chain is Leucyl/phenylalanyl-tRNA--protein transferase, found in Campylobacter lari (strain RM2100 / D67 / ATCC BAA-1060).